The chain runs to 383 residues: Erythronate-4-phosphate dehydrogenase (383 aa).

Substrate contacts are provided by Ser45 and Thr66. NAD(+)-binding positions include Asp146, Thr174, 205–207 (ASR), and Asp231. Residue Arg207 is part of the active site. Residue Glu236 is part of the active site. Catalysis depends on His253, which acts as the Proton donor. NAD(+) is bound at residue Gly256. Substrate is bound at residue Tyr257.

Belongs to the D-isomer specific 2-hydroxyacid dehydrogenase family. PdxB subfamily. Homodimer.

It is found in the cytoplasm. It catalyses the reaction 4-phospho-D-erythronate + NAD(+) = (R)-3-hydroxy-2-oxo-4-phosphooxybutanoate + NADH + H(+). It participates in cofactor biosynthesis; pyridoxine 5'-phosphate biosynthesis; pyridoxine 5'-phosphate from D-erythrose 4-phosphate: step 2/5. Catalyzes the oxidation of erythronate-4-phosphate to 3-hydroxy-2-oxo-4-phosphonooxybutanoate. The sequence is that of Erythronate-4-phosphate dehydrogenase from Pseudomonas entomophila (strain L48).